We begin with the raw amino-acid sequence, 308 residues long: Adipolin (308 aa).

The N-terminal stretch at 1 to 21 (MWAWGWAAAALLWLQTAGAGA) is a signal peptide. The segment at 36–119 (DSPNITTSNR…PPGSPGVGVT (84 aa)) is disordered. N39 carries N-linked (GlcNAc...) asparagine glycosylation. Residues 82–93 (RKRCRGRDKKSR) show a composition bias toward basic residues. The segment covering 99–113 (PGPPGPPGPPGPPGS) has biased composition (pro residues). A C1q domain is found at 153–308 (QRLVVEAFYC…SSFSGMLLGT (156 aa)).

The protein belongs to the adipolin/erythroferrone family. Homomultimer; disulfide-linked. Adipolin fC1QTNF12: homotrimer; disulfide-linked. Adipolin gC1QTNF12: homodimer; disulfide-linked. May interact with ERFE. Post-translationally, processed into Adipolin fC1QTNF12 and Adipolin gC1QTNF12 by FURIN. Insulin enhances endogenous C1QTNF12 cleavage. In terms of tissue distribution, widely expressed, with high expression in subcutaneous and epididymal white adipose tissues and brown adipose tissue. Expressed in adipocytes (at protein level).

Its subcellular location is the secreted. Functionally, insulin-sensitizing adipocyte-secreted protein (adipokine) that regulates glucose metabolism in liver and adipose tissue. Promotes glucose uptake in adipocytes and suppresses de novo glucose production in hepatocytes via the PI3K-Akt signaling pathway. Administration lead to reduction of blood glucose. Able to attenuate inflammation in fat tissue. Acts by activating the Akt signaling in hepatocytes and adipocytes. Not able to increase insulin-stimulated glucose uptake in adipocytes. In terms of biological role, acts by activating the MAP kinase. Increases insulin-stimulated glucose uptake in adipocytes. In Mus musculus (Mouse), this protein is Adipolin (C1qtnf12).